Here is a 68-residue protein sequence, read N- to C-terminus: Guanine nucleotide-binding protein G(I)/G(S)/G(O) subunit gamma-5 (68 aa).

N-acetylserine is present on S2. Residue S2 is modified to Phosphoserine. C65 carries the cysteine methyl ester modification. A lipid anchor (S-geranylgeranyl cysteine) is attached at C65. A propeptide spans 66 to 68 (SFL) (removed in mature form).

It belongs to the G protein gamma family. In terms of assembly, g proteins are composed of 3 units, alpha, beta and gamma. As to expression, expressed in a variety of tissues.

The protein localises to the cell membrane. Functionally, guanine nucleotide-binding proteins (G proteins) are involved as a modulator or transducer in various transmembrane signaling systems. The beta and gamma chains are required for the GTPase activity, for replacement of GDP by GTP, and for G protein-effector interaction. The sequence is that of Guanine nucleotide-binding protein G(I)/G(S)/G(O) subunit gamma-5 (GNG5) from Bos taurus (Bovine).